The sequence spans 146 residues: Hemoglobin subunit beta-2 (146 aa).

Residues 2–146 (HWTAEEKQLV…VAHALAYHYH (145 aa)) enclose the Globin domain. Heme b contacts are provided by histidine 63 and histidine 92.

It belongs to the globin family. In terms of assembly, there are three forms of hemoglobin in Sphenodon: A, A' and D. Hb A is a tetramer of two alpha-A and two beta-1, Hb A' is a tetramer of two alpha-a and two beta-2, Hb D is a tetramer of two alpha-D and two beta-2.

Involved in oxygen transport from the lung to the various peripheral tissues. In Sphenodon punctatus (Tuatara), this protein is Hemoglobin subunit beta-2 (HBB2).